The sequence spans 571 residues: La-related protein 7 (571 aa).

Met1 bears the N-acetylmethionine mark. Residues 1-17 (METENQKTMEESTEKRK) show a composition bias toward basic and acidic residues. Disordered stretches follow at residues 1-25 (METENQKTMEESTEKRKEEKKKRSR) and 181-366 (LNNP…ERHK). Residues 23-117 (RSRVKQVLAD…KPLGERPKDE (95 aa)) enclose the HTH La-type RNA-binding domain. The RRM domain maps to 120 to 198 (RTVYVELLPK…PRKPGIFPKT (79 aa)). Basic residues predominate over residues 214–223 (KKKKKKKGRI). Residue Lys232 forms a Glycyl lysine isopeptide (Lys-Gly) (interchain with G-Cter in SUMO2) linkage. At Thr252 the chain carries Phosphothreonine. Phosphoserine occurs at positions 254 and 257. Thr261 is modified (phosphothreonine). Basic and acidic residues predominate over residues 287–296 (KAGKRERSSA). Residues Ser294, Ser295, and Ser335 each carry the phosphoserine modification. Thr336 is subject to Phosphothreonine. Positions 342 to 351 (PGDRKGDSLS) are enriched in basic and acidic residues. Ser349 carries the post-translational modification Phosphoserine. The span at 352-365 (KGKRKHKKKHKERH) shows a compositional bias: basic residues. Lys408 participates in a covalent cross-link: Glycyl lysine isopeptide (Lys-Gly) (interchain with G-Cter in SUMO2). Residues 411-432 (SEMETESKAPPGSGQQCSTQEK) form a disordered region. Positions 423 to 432 (SGQQCSTQEK) are enriched in polar residues. Residues 439–552 (QFVTGVIVKI…TEKLITKAEK (114 aa)) form the xRRM domain.

This sequence belongs to the LARP7 family. Core component of the 7SK RNP complex, at least composed of 7SK RNA, LARP7, MEPCE, HEXIM1 (or HEXIM2) and P-TEFb (composed of CDK9 and CCNT1/cyclin-T1). Interacts with METTL16. Interacts with RBM7; upon genotoxic stress this interaction is enhanced, triggering the release of inactive P-TEFb complex from the core, yielding to P-TEFb complex activation. Associates with box C/D small nucleolar ribonucleoprotein (snoRNP) complexes.

Its subcellular location is the nucleus. It localises to the nucleoplasm. RNA-binding protein that specifically binds distinct small nuclear RNA (snRNAs) and regulates their processing and function. Specifically binds the 7SK snRNA (7SK RNA) and acts as a core component of the 7SK ribonucleoprotein (RNP) complex, thereby acting as a negative regulator of transcription elongation by RNA polymerase II. The 7SK RNP complex sequesters the positive transcription elongation factor b (P-TEFb) in a large inactive 7SK RNP complex preventing RNA polymerase II phosphorylation and subsequent transcriptional elongation. The 7SK RNP complex also promotes snRNA gene transcription by RNA polymerase II via interaction with the little elongation complex (LEC). LARP7 specifically binds to the highly conserved 3'-terminal U-rich stretch of 7SK RNA; on stimulation, remains associated with 7SK RNA, whereas P-TEFb is released from the complex. LARP7 also acts as a regulator of mRNA splicing fidelity by promoting U6 snRNA processing. Specifically binds U6 snRNAs and associates with a subset of box C/D RNP complexes: promotes U6 snRNA 2'-O-methylation by facilitating U6 snRNA loading into box C/D RNP complexes. U6 snRNA 2'-O-methylation is required for mRNA splicing fidelity. Binds U6 snRNAs with a 5'-CAGGG-3' sequence motif. U6 snRNA processing is required for spermatogenesis. This is La-related protein 7 from Rattus norvegicus (Rat).